The following is a 501-amino-acid chain: L-aspartate decarboxylase dtxS4 (501 aa).

Lysine 106–threonine 108 lines the substrate pocket. N6-(pyridoxal phosphate)lysine is present on lysine 320. A substrate-binding site is contributed by arginine 474.

It belongs to the group II decarboxylase family. The cofactor is pyridoxal 5'-phosphate.

The catalysed reaction is L-aspartate + H(+) = beta-alanine + CO2. It participates in secondary metabolite biosynthesis. L-aspartate decarboxylase; part of the gene cluster that mediates the biosynthesis of destruxins, insecticidal cyclic hexadepsipeptides which induce flaccid paralysis and visceral muscle contraction in insects through targeting the calcium channels and vacuolar-type ATPases. The aldo-keto reductase dtxS3 converts alpha-ketoisocaproic acid from deaminated leucine into alpha-hydroxyisocaproic acid (HIC), which is the first substrate for destruxin assembly by dtxS1. L-aspartate decarboxylase dtxS4 converts aspartic acid into beta-alanine, the last substrate for the destruxin assembly line performed by dtxS1. The nonribosomal peptide synthetase dtxS1 synthesizes destruxins B and B2, whereas the cytochrome P450 monooxygenase dtxS2 is required to convert destruxin B into other destruxin derivatives, including destructins C, D, A and E. Destruxin E-diol (ED) is further produced in a non-enzymatic manner from destruxin E. Destruxins play an important role in virulence and escape from insect host immune defenses. The polypeptide is L-aspartate decarboxylase dtxS4 (Metarhizium robertsii (strain ARSEF 23 / ATCC MYA-3075) (Metarhizium anisopliae (strain ARSEF 23))).